A 225-amino-acid polypeptide reads, in one-letter code: 2-C-methyl-D-erythritol 4-phosphate cytidylyltransferase (225 aa).

It belongs to the IspD/TarI cytidylyltransferase family. IspD subfamily.

The catalysed reaction is 2-C-methyl-D-erythritol 4-phosphate + CTP + H(+) = 4-CDP-2-C-methyl-D-erythritol + diphosphate. It participates in isoprenoid biosynthesis; isopentenyl diphosphate biosynthesis via DXP pathway; isopentenyl diphosphate from 1-deoxy-D-xylulose 5-phosphate: step 2/6. Catalyzes the formation of 4-diphosphocytidyl-2-C-methyl-D-erythritol from CTP and 2-C-methyl-D-erythritol 4-phosphate (MEP). The protein is 2-C-methyl-D-erythritol 4-phosphate cytidylyltransferase of Clostridium perfringens (strain SM101 / Type A).